The sequence spans 621 residues: CEP295 N-terminal-like protein (621 aa).

Residues 142–253 (GGRARENEPD…RSKGADLERS (112 aa)) form a disordered region. Positions 159–170 (RSARPPRAKEKH) are enriched in basic residues. Residues 171–185 (RAALSEERSCREELG) are compositionally biased toward basic and acidic residues. Polar residues predominate over residues 203–213 (KPQTTKATGRM). Over residues 219-229 (PPEKRKGRPEP) the composition is skewed to basic and acidic residues. The stretch at 328–359 (QCTLREKNKWQKELELAFEELFNINRKLKKHL) forms a coiled coil. Disordered stretches follow at residues 385 to 421 (CGAG…ASKT), 491 to 529 (DQAD…PDMS), and 543 to 586 (REQR…DRHS). A coiled-coil region spans residues 498-525 (STASRQRQKAEMEQRRQKQLESLEQMEH). Residues 505-529 (QKAEMEQRRQKQLESLEQMEHPDMS) show a composition bias toward basic and acidic residues. The span at 568–578 (ELSTTSPSGTS) shows a compositional bias: polar residues.

The protein resides in the cell projection. Its subcellular location is the cilium. The polypeptide is CEP295 N-terminal-like protein (Homo sapiens (Human)).